The primary structure comprises 360 residues: Phospho-N-acetylmuramoyl-pentapeptide-transferase (360 aa).

The next 10 helical transmembrane spans lie at 21 to 41 (YLTF…LWIG), 71 to 91 (TPTM…ILWA), 94 to 114 (SNPY…IGFI), 142 to 162 (LVVA…VLVV), 168 to 188 (IMPQ…VGAS), 199 to 219 (GLAI…AWAT), 236 to 256 (ASEL…FLWF), 263 to 283 (VFMG…IAVL), 288 to 308 (FLLF…ILQV), and 338 to 358 (VIVR…VTLK).

The protein belongs to the glycosyltransferase 4 family. MraY subfamily. Mg(2+) serves as cofactor.

The protein resides in the cell inner membrane. The catalysed reaction is UDP-N-acetyl-alpha-D-muramoyl-L-alanyl-gamma-D-glutamyl-meso-2,6-diaminopimeloyl-D-alanyl-D-alanine + di-trans,octa-cis-undecaprenyl phosphate = di-trans,octa-cis-undecaprenyl diphospho-N-acetyl-alpha-D-muramoyl-L-alanyl-D-glutamyl-meso-2,6-diaminopimeloyl-D-alanyl-D-alanine + UMP. It functions in the pathway cell wall biogenesis; peptidoglycan biosynthesis. Functionally, catalyzes the initial step of the lipid cycle reactions in the biosynthesis of the cell wall peptidoglycan: transfers peptidoglycan precursor phospho-MurNAc-pentapeptide from UDP-MurNAc-pentapeptide onto the lipid carrier undecaprenyl phosphate, yielding undecaprenyl-pyrophosphoryl-MurNAc-pentapeptide, known as lipid I. This chain is Phospho-N-acetylmuramoyl-pentapeptide-transferase, found in Tolumonas auensis (strain DSM 9187 / NBRC 110442 / TA 4).